We begin with the raw amino-acid sequence, 329 residues long: Serpentine receptor class alpha-2 (329 aa).

The next 7 helical transmembrane spans lie at 25–45 (FVYL…VKIL), 57–77 (ILLV…GIEA), 104–124 (YYKI…GLLI), 144–164 (CAVI…LIVW), 188–208 (HYFT…TFIL), 240–260 (FLTV…IVLV), and 273–293 (LLVV…VILV).

It belongs to the nematode receptor-like protein sra family.

It localises to the membrane. This chain is Serpentine receptor class alpha-2 (sra-2), found in Caenorhabditis elegans.